A 575-amino-acid polypeptide reads, in one-letter code: Sorting nexin-41 (575 aa).

Positions 30-66 (TDGPDDYDFTEPSINGSSDENAQSNAVAEPIEETDEP) are disordered. Residues 41-55 (PSINGSSDENAQSNA) are compositionally biased toward polar residues. The PX domain occupies 101-221 (QGKNPEVIRI…QKFLNPEYFW (121 aa)). Arg139, Ser141, Lys165, and Arg188 together coordinate a 1,2-diacyl-sn-glycero-3-phospho-(1D-myo-inositol-3-phosphate). The tract at residues 467 to 486 (FRSSASPNNKSGSDSISSEV) is disordered. The segment covering 469 to 484 (SSASPNNKSGSDSISS) has biased composition (polar residues).

Belongs to the sorting nexin family.

It localises to the endosome membrane. The protein resides in the endomembrane system. May be required for cytoplasm to vacuole transport (Cvt) and pexophagy. The protein is Sorting nexin-41 (SNX41) of Kluyveromyces lactis (strain ATCC 8585 / CBS 2359 / DSM 70799 / NBRC 1267 / NRRL Y-1140 / WM37) (Yeast).